The sequence spans 69 residues: Large ribosomal subunit protein bL31 (69 aa).

4 residues coordinate Zn(2+): cysteine 17, cysteine 19, cysteine 37, and cysteine 40.

The protein belongs to the bacterial ribosomal protein bL31 family. Type A subfamily. In terms of assembly, part of the 50S ribosomal subunit. Zn(2+) serves as cofactor.

Binds the 23S rRNA. The polypeptide is Large ribosomal subunit protein bL31 (Clostridium novyi (strain NT)).